The primary structure comprises 148 residues: 3-dehydroquinate dehydratase (148 aa).

The active-site Proton acceptor is Tyr-22. Positions 73, 79, and 86 each coordinate substrate. His-99 serves as the catalytic Proton donor. Substrate is bound by residues 100–101 (LS) and Arg-110.

It belongs to the type-II 3-dehydroquinase family. In terms of assembly, homododecamer.

It catalyses the reaction 3-dehydroquinate = 3-dehydroshikimate + H2O. It participates in metabolic intermediate biosynthesis; chorismate biosynthesis; chorismate from D-erythrose 4-phosphate and phosphoenolpyruvate: step 3/7. Its function is as follows. Catalyzes a trans-dehydration via an enolate intermediate. The sequence is that of 3-dehydroquinate dehydratase from Jannaschia sp. (strain CCS1).